The primary structure comprises 321 residues: Tyrosine recombinase XerC (321 aa).

The Core-binding (CB) domain maps to 16-107; sequence PSIAQEMTRW…GLRSFGRFLE (92 aa). Positions 128–315 constitute a Tyr recombinase domain; that stretch reads SLPKPLPMAS…DSERLLEVYA (188 aa). Residues Arg173, Lys199, His267, Arg270, and His293 contribute to the active site. The active-site O-(3'-phospho-DNA)-tyrosine intermediate is Tyr302.

The protein belongs to the 'phage' integrase family. XerC subfamily. In terms of assembly, forms a cyclic heterotetrameric complex composed of two molecules of XerC and two molecules of XerD.

The protein resides in the cytoplasm. Site-specific tyrosine recombinase, which acts by catalyzing the cutting and rejoining of the recombining DNA molecules. The XerC-XerD complex is essential to convert dimers of the bacterial chromosome into monomers to permit their segregation at cell division. It also contributes to the segregational stability of plasmids. The chain is Tyrosine recombinase XerC from Bradyrhizobium diazoefficiens (strain JCM 10833 / BCRC 13528 / IAM 13628 / NBRC 14792 / USDA 110).